We begin with the raw amino-acid sequence, 290 residues long: Small ribosomal subunit biogenesis GTPase RsgA (290 aa).

A CP-type G domain is found at Lys-61–Leu-218. Residues Asn-110–Asp-113 and Gly-161–Thr-169 each bind GTP. 4 residues coordinate Zn(2+): Cys-243, Cys-248, His-250, and Cys-256.

The protein belongs to the TRAFAC class YlqF/YawG GTPase family. RsgA subfamily. Monomer. Associates with 30S ribosomal subunit, binds 16S rRNA. Requires Zn(2+) as cofactor.

The protein resides in the cytoplasm. Functionally, one of several proteins that assist in the late maturation steps of the functional core of the 30S ribosomal subunit. Helps release RbfA from mature subunits. May play a role in the assembly of ribosomal proteins into the subunit. Circularly permuted GTPase that catalyzes slow GTP hydrolysis, GTPase activity is stimulated by the 30S ribosomal subunit. This Clostridium beijerinckii (strain ATCC 51743 / NCIMB 8052) (Clostridium acetobutylicum) protein is Small ribosomal subunit biogenesis GTPase RsgA.